The primary structure comprises 86 residues: Insulin-related peptide 2 (86 aa).

The N-terminal stretch at M1–S19 is a signal peptide. A propeptide spanning residues Q20–E43 is cleaved from the precursor. Residue R63 is modified to Arginine amide. Residues G67–C86 constitute a propeptide that is removed on maturation.

Belongs to the insulin family. DAGWWVPPQSARALGGGR-amide: Expressed in corpora cardiaca (CC), corpora allata (CA), antennal lobe (AL) and gnathal ganglion (GNG) (at protein level). Expression in CC and CA detected in most animals, in AL in some animals and in GNG in few animals (at protein level).

It is found in the secreted. The sequence is that of Insulin-related peptide 2 from Agrotis ipsilon (Black cutworm moth).